Reading from the N-terminus, the 414-residue chain is Esterase FrsA (414 aa).

It belongs to the FrsA family.

It catalyses the reaction a carboxylic ester + H2O = an alcohol + a carboxylate + H(+). Functionally, catalyzes the hydrolysis of esters. The sequence is that of Esterase FrsA from Escherichia coli O8 (strain IAI1).